Reading from the N-terminus, the 517-residue chain is FAD-dependent monooxygenase dmxR9 (517 aa).

FAD is bound by residues Val-96 and Arg-162. Catalysis depends on residues Arg-243 and Tyr-270. Residues Asp-365 and Ala-378 each coordinate FAD.

The protein belongs to the paxM FAD-dependent monooxygenase family. FAD is required as a cofactor.

The protein operates within secondary metabolite biosynthesis. Its function is as follows. FAD-dependent monooxygenase; part of the gene cluster that mediates the biosynthesis of the dimeric xanthones cryptosporioptides. The pathway begins with the synthesis of atrochrysone thioester by the polyketide synthase dmx-nrPKS. The atrochrysone carboxyl ACP thioesterase dmxR1 then breaks the thioester bond and releases the atrochrysone carboxylic acid from dmx-nrPKS. Atrochrysone carboxylic acid is decarboxylated by the decarboxylase dmxR15, and oxidized by the anthrone oxygenase dmxR16 to yield emodin. Emodin is then reduced to emodin hydroquinone by the oxidoreductase dmxR7. A-ring reduction by the short chain dehydrogenase dmxR18, dehydration by the scytalone dehydratase-like protein dmxR17 and probable spontaneous re-oxidation, results in overall deoxygenation to chrysophanol. Baeyer-Villiger oxidation by the Baeyer-Villiger monooxygenase (BVMO) dmxR6 then yields monodictylactone in equilibrium with monodictyphenone. In the case of the cryptosporioptides biosynthesis, monodictylactone is reduced at C-12 to an alcohol (by the short chain dehydrogenases dmxR12 or dmxR8) and hydroxylated at C-5 by dmxR9, yielding the electron-rich aromatic which could eliminate H(2)O to form the ortho-quinonemethide, followed by tautomerisation to paraquinone and complete the formal reduction to produce the 10-methylgroup. Conjugate addition of C-4a-OH to the resulting paraquinone by the monooxygenase dmxR10 then gives cyclohexadienone, which is then reduced at C-5 by the short chain dehydrogenase dmxR3 to give the dihydroxanthone. The 6,7-epoxide in the cryptosporioptides could be introduced by the cytochrome P450 monooxygenase dmxL3. The highly reducing PKS dmxL2 manufactures butyrate, which is further carboxylated by dmxL1 to form ethylmalonate. It is not yet clear whether the carboxylation occurs while the butyrate is attached to the ACP of dmxL2, but this unusual fungal metabolite could then be esterified to O-5 by the O-acetyltransferase dmxR13. Finally, dimerization performed by dmxR5 gives the observed dimers cryptosporioptides A, B and C as the final products of the pathway. In Cryptosporiopsis sp. (strain 8999), this protein is FAD-dependent monooxygenase dmxR9.